A 293-amino-acid chain; its full sequence is LysM and putative peptidoglycan-binding domain-containing protein 4 (293 aa).

The Extracellular segment spans residues 1–214; it reads MRQKEVLAKS…VADGADCGIQ (214 aa). The interval 28–65 is disordered; that stretch reads FNNGSGDSGDSSEEESHQVVLRPRGKEHQKNSSQRPGA. Asn30 carries N-linked (GlcNAc...) asparagine glycosylation. The 45-residue stretch at 71-115 folds into the LysM domain; it reads LQRELAQEDSLNKLALQYGCKVADIKKANNFIREQDLYALKSIKI. A helical transmembrane segment spans residues 215 to 235; sequence WWNAVFLMLLIGIVLPVFYLV. At 236 to 293 the chain is on the cytoplasmic side; the sequence is YFKIQATGEPSNGLNATVVPNGSMTLSPVPGQAPRLAIPVPTLPASDSQVSPTTQAGA.

The protein resides in the membrane. This Mus musculus (Mouse) protein is LysM and putative peptidoglycan-binding domain-containing protein 4 (Lysmd4).